A 387-amino-acid polypeptide reads, in one-letter code: Phosphoglycerate kinase (387 aa).

Residues 21 to 23, Arg-36, 59 to 62, Arg-113, and Arg-146 each bind substrate; these read DLN and HLGR. ATP contacts are provided by residues Lys-197, Glu-314, and 340–343; that span reads GGDT.

Belongs to the phosphoglycerate kinase family. In terms of assembly, monomer.

The protein localises to the cytoplasm. The enzyme catalyses (2R)-3-phosphoglycerate + ATP = (2R)-3-phospho-glyceroyl phosphate + ADP. It functions in the pathway carbohydrate degradation; glycolysis; pyruvate from D-glyceraldehyde 3-phosphate: step 2/5. The polypeptide is Phosphoglycerate kinase (Sodalis glossinidius (strain morsitans)).